The following is a 402-amino-acid chain: Elongation factor Tu (402 aa).

Residues 10–212 (KPHVNIGTIG…AVDEYIPTPE (203 aa)) form the tr-type G domain. The tract at residues 19–26 (GHVDHGKT) is G1. 19–26 (GHVDHGKT) provides a ligand contact to GTP. A Mg(2+)-binding site is contributed by Thr-26. The segment at 60-64 (GITIA) is G2. Positions 81–84 (DCPG) are G3. GTP contacts are provided by residues 81–85 (DCPGH) and 136–139 (NKED). Residues 136 to 139 (NKED) are G4. The tract at residues 177–179 (SAF) is G5.

The protein belongs to the TRAFAC class translation factor GTPase superfamily. Classic translation factor GTPase family. EF-Tu/EF-1A subfamily. Monomer.

The protein resides in the cytoplasm. It catalyses the reaction GTP + H2O = GDP + phosphate + H(+). Functionally, GTP hydrolase that promotes the GTP-dependent binding of aminoacyl-tRNA to the A-site of ribosomes during protein biosynthesis. The protein is Elongation factor Tu of Aliarcobacter butzleri (strain RM4018) (Arcobacter butzleri).